The primary structure comprises 131 residues: Large ribosomal subunit protein uL22c (131 aa).

The protein belongs to the universal ribosomal protein uL22 family. In terms of assembly, part of the 50S ribosomal subunit.

It is found in the plastid. Functionally, this protein binds specifically to 23S rRNA. In terms of biological role, the globular domain of the protein is located near the polypeptide exit tunnel on the outside of the subunit, while an extended beta-hairpin is found that lines the wall of the exit tunnel in the center of the 70S ribosome. The protein is Large ribosomal subunit protein uL22c (rpl22) of Aneura mirabilis (Parasitic liverwort).